The sequence spans 711 residues: Receptor-like protein 43 (711 aa).

Positions 1 to 30 are cleaved as a signal peptide; the sequence is MKGFWNSKSTIRITLSFIFLFISQFSDVLA. At 31–666 the chain is on the extracellular side; sequence APTRHLCRPE…EDEEVISWIA (636 aa). N-linked (GlcNAc...) asparagine glycosylation is found at asparagine 78, asparagine 114, asparagine 143, asparagine 167, and asparagine 191. 8 LRR repeats span residues 120–143, 144–168, 170–192, 193–216, 218–240, 241–266, 268–288, and 289–316; these read LHFL…SIEN, LSHL…IGNL, HLTF…IGNL, SHLT…IGGL, HLTT…IGNL, SNLT…NLSQ, TRLD…LWTL, and PNLF…SMGH. Asparagine 239, asparagine 242, asparagine 252, and asparagine 263 each carry an N-linked (GlcNAc...) asparagine glycan. Asparagine 295, asparagine 323, asparagine 347, asparagine 362, and asparagine 372 each carry an N-linked (GlcNAc...) asparagine glycan. One copy of the LRR 9; degenerate repeat lies at 317–334; the sequence is LLGSNNNFTGKIPSFICE. 10 LRR repeats span residues 335-358, 360-384, 386-406, 407-430, 431-452, 453-476, 519-543, 544-567, 568-591, and 593-616; these read LRSL…CMGN, KSNL…IFEI, RSLD…LRFF, STLE…LTSL, PKLQ…EASF, LKLR…YFVK, LTIY…IGLL, KELL…MGKL, TALE…IGNL, and FLSC…QFLT. A glycan (N-linked (GlcNAc...) asparagine) is linked at asparagine 420. Asparagine 466 is a glycosylation site (N-linked (GlcNAc...) asparagine). N-linked (GlcNAc...) asparagine glycosylation is found at asparagine 550, asparagine 590, and asparagine 598. A helical membrane pass occupies residues 667–687; that stretch reads AAIGFIPGIVLGLTIGYILVF. The Cytoplasmic segment spans residues 688-711; the sequence is YKPEWFIKTFGRNNCRRRSTTTTH.

The protein belongs to the RLP family.

It is found in the cell membrane. The polypeptide is Receptor-like protein 43 (Arabidopsis thaliana (Mouse-ear cress)).